Consider the following 343-residue polypeptide: tRNA N6-adenosine threonylcarbamoyltransferase (343 aa).

The Fe cation site is built by H115 and H119. Substrate-binding positions include 137–141, D170, G183, D187, and N276; that span reads IVSGG. D304 serves as a coordination point for Fe cation.

The protein belongs to the KAE1 / TsaD family. Fe(2+) serves as cofactor.

The protein resides in the cytoplasm. The catalysed reaction is L-threonylcarbamoyladenylate + adenosine(37) in tRNA = N(6)-L-threonylcarbamoyladenosine(37) in tRNA + AMP + H(+). Required for the formation of a threonylcarbamoyl group on adenosine at position 37 (t(6)A37) in tRNAs that read codons beginning with adenine. Is involved in the transfer of the threonylcarbamoyl moiety of threonylcarbamoyl-AMP (TC-AMP) to the N6 group of A37, together with TsaE and TsaB. TsaD likely plays a direct catalytic role in this reaction. In Staphylococcus carnosus (strain TM300), this protein is tRNA N6-adenosine threonylcarbamoyltransferase.